Reading from the N-terminus, the 266-residue chain is Prolactin-7A1 (266 aa).

The first 30 residues, 1-30 (MPLSFTQPCSSGALLLLVVSNLLLWENVAC), serve as a signal peptide directing secretion. N-linked (GlcNAc...) asparagine glycans are attached at residues Asn36, Asn58, Asn110, Asn149, and Asn157. 2 disulfides stabilise this stretch: Cys114–Cys231 and Cys248–Cys257.

This sequence belongs to the somatotropin/prolactin family. As to expression, expressed specifically in the placenta. Detected only in the trophoblast giant cells.

It localises to the secreted. This Mus musculus (Mouse) protein is Prolactin-7A1 (Prl7a1).